A 917-amino-acid polypeptide reads, in one-letter code: Intercellular adhesion molecule 5 (917 aa).

Residues 1 to 31 (MPGPSPGLRRALLGLWAALGLGILGISAVAL) form the signal peptide. The Extracellular segment spans residues 32–833 (EPFWADLQPR…RITVRVAGPW (802 aa)). Ig-like C2-type domains lie at 48–130 (GGSL…PLPS), 135–235 (GENF…SLIA), 242–329 (DSER…LLTL), 337–402 (GKMV…SSEL), 408–486 (PRLD…VTLT), 491–567 (PALD…VAVT), 572–651 (PSFE…NRHG), 665–738 (PQMD…RTVT), and 745–828 (PVVA…ITVR). Asn-54 carries an N-linked (GlcNAc...) (high mannose) asparagine glycan. Intrachain disulfides connect Cys-55–Cys-99 and Cys-59–Cys-103. N-linked (GlcNAc...) asparagine glycosylation is found at Asn-74 and Asn-137. Cysteines 142 and 198 form a disulfide. At Thr-182 the chain carries Phosphothreonine. Asn-195, Asn-214, Asn-274, Asn-316, Asn-371, and Asn-397 each carry an N-linked (GlcNAc...) asparagine glycan. Cys-249 and Cys-302 form a disulfide bridge. The cysteines at positions 344 and 383 are disulfide-linked. Intrachain disulfides connect Cys-415-Cys-470, Cys-498-Cys-551, and Cys-579-Cys-644. N-linked (GlcNAc...) asparagine glycosylation is found at Asn-582 and Asn-645. Residues Cys-672 and Cys-724 are joined by a disulfide bond. 3 N-linked (GlcNAc...) asparagine glycosylation sites follow: Asn-762, Asn-793, and Asn-794. Cys-767 and Cys-812 are joined by a disulfide. The helical transmembrane segment at 834–854 (LWVAVGGAAGGAALLAAGAGL) threads the bilayer. The Cytoplasmic portion of the chain corresponds to 855–917 (AFYVQSTACK…EVFAIQLTSS (63 aa)). The segment covering 884–893 (GAGGTPGAEG) has biased composition (gly residues). A disordered region spans residues 884–908 (GAGGTPGAEGGAETPGTAESPADGE).

Belongs to the immunoglobulin superfamily. ICAM family. Post-translationally, glycosylation at Asn-54 is critical for functional folding. Expressed on neurons in the most rostral segment of the mammalian brain, the telencephalon.

It localises to the membrane. Its function is as follows. ICAM proteins are ligands for the leukocyte adhesion protein LFA-1 (integrin alpha-L/beta-2). This is Intercellular adhesion molecule 5 (Icam5) from Mus musculus (Mouse).